Reading from the N-terminus, the 484-residue chain is ATP synthase subunit beta (484 aa).

The segment at 104 to 123 (ERGPIGSKQTMPIHADAPPF) is disordered. 156 to 163 (GGAGVGKT) is a binding site for ATP.

This sequence belongs to the ATPase alpha/beta chains family. F-type ATPases have 2 components, CF(1) - the catalytic core - and CF(0) - the membrane proton channel. CF(1) has five subunits: alpha(3), beta(3), gamma(1), delta(1), epsilon(1). CF(0) has three main subunits: a(1), b(2) and c(9-12). The alpha and beta chains form an alternating ring which encloses part of the gamma chain. CF(1) is attached to CF(0) by a central stalk formed by the gamma and epsilon chains, while a peripheral stalk is formed by the delta and b chains.

Its subcellular location is the cell inner membrane. The catalysed reaction is ATP + H2O + 4 H(+)(in) = ADP + phosphate + 5 H(+)(out). In terms of biological role, produces ATP from ADP in the presence of a proton gradient across the membrane. The catalytic sites are hosted primarily by the beta subunits. This chain is ATP synthase subunit beta, found in Zymomonas mobilis subsp. mobilis (strain ATCC 31821 / ZM4 / CP4).